A 233-amino-acid polypeptide reads, in one-letter code: Ribosome maturation factor RimP (233 aa).

Over residues 167-179 the composition is skewed to basic and acidic residues; that stretch reads RGKAAEREKKRDL. The disordered stretch occupies residues 167–233; that stretch reads RGKAAEREKK…RARRGEIDPD (67 aa). The span at 187–196 shows a compositional bias: low complexity; it reads PHAKPAAQAK. Basic and acidic residues predominate over residues 220-233; that stretch reads LAADRARRGEIDPD.

This sequence belongs to the RimP family.

It localises to the cytoplasm. Required for maturation of 30S ribosomal subunits. In Bradyrhizobium sp. (strain ORS 278), this protein is Ribosome maturation factor RimP.